The primary structure comprises 72 residues: Probable neurotoxin pcD-993 (72 aa).

Positions 1 to 19 (MNYLVMISFALLLVIGVES) are cleaved as a signal peptide. Residues 21–72 (RDGYFVEPDNCVVHCMPSSEMCDRGCKHNGATSGSCKAFSKGGNACWCKGLR) enclose the LCN-type CS-alpha/beta domain. Disulfide bonds link Cys35/Cys56, Cys42/Cys66, and Cys46/Cys68. Arg72 is a propeptide (removed by a carboxypeptidase).

It belongs to the long (3 C-C) scorpion toxin superfamily. Expressed by the venom gland.

Its subcellular location is the secreted. This is Probable neurotoxin pcD-993 from Androctonus australis (Sahara scorpion).